A 108-amino-acid chain; its full sequence is Zinc metalloproteinase/disintegrin (108 aa).

The 19-residue stretch at 1-19 (NEYQTYLTDRNPQCILNEP) folds into the Peptidase M12B domain. A propeptide spanning residues 20–35 (LRTDTVSTPVSGNELL) is cleaved from the precursor. Positions 27–108 (TPVSGNELLE…ADCPRNGFYG (82 aa)) constitute a Disintegrin domain. 6 disulfide bridges follow: Cys-41/Cys-56, Cys-43/Cys-51, Cys-50/Cys-73, Cys-64/Cys-70, Cys-69/Cys-94, and Cys-82/Cys-101. Positions 86–88 (KGD) match the Cell attachment site; atypical (KGD) motif.

It belongs to the venom metalloproteinase (M12B) family. P-II subfamily. P-IIa sub-subfamily. In terms of assembly, monomeric (disintegrin). Zn(2+) serves as cofactor. In terms of tissue distribution, expressed by the venom gland.

It is found in the secreted. Its function is as follows. Impairs hemostasis in the envenomed animal. Functionally, inhibits platelet aggregation induced by ADP, thrombin, platelet-activating factor and collagen. Acts by inhibiting fibrinogen interaction with platelet receptors GPIIb/GPIIIa (ITGA2B/ITGB3). The polypeptide is Zinc metalloproteinase/disintegrin (Gloydius brevicauda (Korean slamosa snake)).